Consider the following 284-residue polypeptide: Probable protein phosphatase 2C 41 (284 aa).

The region spanning 35–282 (SYGFYLVRGM…DDISCVVVRF (248 aa)) is the PPM-type phosphatase domain. Residues D72, G73, D234, and D273 each contribute to the Mn(2+) site.

This sequence belongs to the PP2C family. Mg(2+) serves as cofactor. The cofactor is Mn(2+).

It catalyses the reaction O-phospho-L-seryl-[protein] + H2O = L-seryl-[protein] + phosphate. The catalysed reaction is O-phospho-L-threonyl-[protein] + H2O = L-threonyl-[protein] + phosphate. The chain is Probable protein phosphatase 2C 41 from Oryza sativa subsp. japonica (Rice).